We begin with the raw amino-acid sequence, 562 residues long: Matrix metalloproteinase-25 (562 aa).

Positions 1-21 (MRLRLRLLALLLLLLAPPARA) are cleaved as a signal peptide. The propeptide occupies 22 to 107 (PKPSAQDVSL…VAGLVRRRRR (86 aa)). A Cysteine switch motif is present at residues 88-95 (PRCSLPDV). Residues Cys90 and His233 each coordinate Zn(2+). The active site involves Glu234. Zn(2+) contacts are provided by His237 and His243. Positions 278–313 (LYGKAPQTPYDKPTRKPLAPPPQPPASPTHSPSFPI) are disordered. Over residues 295 to 304 (LAPPPQPPAS) the composition is skewed to pro residues. Hemopexin repeat units lie at residues 314 to 363 (PDRC…WEGL), 367 to 412 (VRVV…GLPP), 413 to 461 (GEEV…EGAP), and 462 to 508 (PSPD…WLDC). Cys317 and Cys508 are oxidised to a cystine. The interval 490–526 (SIKTEPDAPQPMGPNWLDCPAPSSGPRAPRPPKATPV) is disordered. Residue Ala539 is the site of GPI-anchor amidated alanine attachment. A propeptide spans 540–562 (AGRWPAPIPLLLLPLLVGGVASR) (removed in mature form).

The protein belongs to the peptidase M10A family. Zn(2+) serves as cofactor. It depends on Ca(2+) as a cofactor. In terms of processing, the precursor is cleaved by a furin endopeptidase. In terms of tissue distribution, expressed predominantly in leukocytes, lung and spleen. Expressed also in colon carcinoma, astrocytoma and glioblastomas.

Its subcellular location is the cell membrane. The protein resides in the secreted. It is found in the extracellular space. It localises to the extracellular matrix. Functionally, may activate progelatinase A. This chain is Matrix metalloproteinase-25 (MMP25), found in Homo sapiens (Human).